The primary structure comprises 104 residues: MIPGEIFYGSGDIEMNAAALSRLQMRIINAGDRPVQVGSHVHLPQANRALSFDRATAHGYRLDIPAATAVRFEPGIPQIVGLVPLGGRREVPGLTLNPPGRLDR.

Belongs to the urease beta subunit family. Heterotrimer of UreA (gamma), UreB (beta) and UreC (alpha) subunits. Three heterotrimers associate to form the active enzyme.

It localises to the cytoplasm. It catalyses the reaction urea + 2 H2O + H(+) = hydrogencarbonate + 2 NH4(+). Its pathway is nitrogen metabolism; urea degradation; CO(2) and NH(3) from urea (urease route): step 1/1. The polypeptide is Urease subunit beta (Mycobacterium bovis (strain BCG / Pasteur 1173P2)).